Here is a 324-residue protein sequence, read N- to C-terminus: Ribose-phosphate pyrophosphokinase 1 (324 aa).

ATP is bound by residues 39 to 41 (DGE) and 98 to 99 (RQ). Residues His132 and Asp174 each contribute to the Mg(2+) site. Lys197 is a catalytic residue. Residues Arg199, Asp223, and 227 to 231 (DTAGT) contribute to the D-ribose 5-phosphate site.

It belongs to the ribose-phosphate pyrophosphokinase family. Class I subfamily. Homohexamer. It depends on Mg(2+) as a cofactor.

It localises to the cytoplasm. The catalysed reaction is D-ribose 5-phosphate + ATP = 5-phospho-alpha-D-ribose 1-diphosphate + AMP + H(+). Its pathway is metabolic intermediate biosynthesis; 5-phospho-alpha-D-ribose 1-diphosphate biosynthesis; 5-phospho-alpha-D-ribose 1-diphosphate from D-ribose 5-phosphate (route I): step 1/1. Involved in the biosynthesis of the central metabolite phospho-alpha-D-ribosyl-1-pyrophosphate (PRPP) via the transfer of pyrophosphoryl group from ATP to 1-hydroxyl of ribose-5-phosphate (Rib-5-P). This chain is Ribose-phosphate pyrophosphokinase 1, found in Lactococcus lactis subsp. lactis (strain IL1403) (Streptococcus lactis).